Here is a 346-residue protein sequence, read N- to C-terminus: RNA polymerase II holoenzyme cyclin-like subunit (346 aa).

Positions 59-158 (NLLIKLGRRL…EMDSYLFLHH (100 aa)) constitute a Cyclin N-terminal domain.

It belongs to the cyclin family. Cyclin C subfamily. In terms of assembly, component of the SRB8-11 complex, a regulatory module of the Mediator complex.

It is found in the nucleus. Component of the SRB8-11 complex. The SRB8-11 complex is a regulatory module of the Mediator complex which is itself involved in regulation of basal and activated RNA polymerase II-dependent transcription. The SRB8-11 complex may be involved in the transcriptional repression of a subset of genes regulated by Mediator. It may inhibit the association of the Mediator complex with RNA polymerase II to form the holoenzyme complex. The SRB8-11 complex phosphorylates the C-terminal domain (CTD) of the largest subunit of RNA polymerase II. The protein is RNA polymerase II holoenzyme cyclin-like subunit (SSN8) of Scheffersomyces stipitis (strain ATCC 58785 / CBS 6054 / NBRC 10063 / NRRL Y-11545) (Yeast).